Consider the following 125-residue polypeptide: Large ribosomal subunit protein bL12 (125 aa).

It belongs to the bacterial ribosomal protein bL12 family. In terms of assembly, homodimer. Part of the ribosomal stalk of the 50S ribosomal subunit. Forms a multimeric L10(L12)X complex, where L10 forms an elongated spine to which 2 to 4 L12 dimers bind in a sequential fashion. Binds GTP-bound translation factors.

Its function is as follows. Forms part of the ribosomal stalk which helps the ribosome interact with GTP-bound translation factors. Is thus essential for accurate translation. In Rickettsia canadensis (strain McKiel), this protein is Large ribosomal subunit protein bL12.